The chain runs to 364 residues: Hepatitis A virus cellular receptor 1 (364 aa).

The first 20 residues, 1–20, serve as a signal peptide directing secretion; sequence MHPQVVILSLILHLADSVAG. The Ig-like V-type domain maps to 21–121; that stretch reads SVKVGGEAGP…WFNDMKITVS (101 aa). Residues 21–295 lie on the Extracellular side of the membrane; it reads SVKVGGEAGP…SLLTANTTKG (275 aa). 3 disulfides stabilise this stretch: Cys36/Cys105, Cys46/Cys57, and Cys52/Cys104. Asn65 is a glycosylation site (N-linked (GlcNAc...) asparagine). 12 repeat units span residues 138–143, 144–149, 150–155, 156–160, 161–165, 166–171, 172–177, 178–183, 184–189, 190–195, 196–201, and 202–207. Residues 138–207 are 12 X 6 AA approximate tandem repeats of V-P-T-T-T-T]; the sequence is VPTVTTVRTS…TTTSVPVTTT (70 aa). A disordered region spans residues 216 to 257; it reads PLPRQNHEPVATSPSSPQPAETHPTTLQGAIRREPTSSPLYS. Residues 227–243 show a composition bias toward polar residues; that stretch reads TSPSSPQPAETHPTTLQ. Asn263, Asn277, and Asn291 each carry an N-linked (GlcNAc...) asparagine glycan. A helical transmembrane segment spans residues 296–316; sequence IYAGVCISVLVLLALLGVIIA. Over 317 to 364 the chain is Cytoplasmic; sequence KKYFFKKEVQQLSVSFSSLQIKALQNAVEKEVQAEDNIYIENSLYATD. Residues Lys338 and Lys346 each participate in a glycyl lysine isopeptide (Lys-Gly) (interchain with G-Cter in ubiquitin) cross-link.

It belongs to the immunoglobulin superfamily. TIM family. As to quaternary structure, interacts with STAM. Interacts with SELPLG. In terms of assembly, (Microbial infection) Interacts with hepatitis A virus capsid proteins. (Microbial infection) Interacts with Ebolavirus envelope glycoprotein GP. As to quaternary structure, (Microbial infection) Interacts with Zika virus envelope protein E. In terms of processing, ubiquitinated at two lysine residues Lys-338 and Lys-346 on its cytoplasmic domain. Ubiquitination promotes receptor endocytosis and target receptors for lysosomal degradation and termination of receptor signaling. (Microbial infection) Ubiquitination is required for Dengue virus endocytosis. Widely expressed, with highest levels in kidney and testis. Expressed by activated CD4+ T-cells during the development of helper T-cells responses.

It localises to the cell membrane. In terms of biological role, phosphatidylserine receptor that plays an important functional role in regulatory B-cells homeostasis including generation, expansion and suppressor functions. As P-selectin/SELPLG ligand, plays a specialized role in activated but not naive T-cell trafficking during inflammatory responses. Controls thereby T-cell accumulation in the inflamed central nervous system (CNS) and the induction of autoimmune disease. Also regulates expression of various anti-inflammatory cytokines and co-inhibitory ligands including IL10. Acts as a regulator of T-cell proliferation. May play a role in kidney injury and repair. (Microbial infection) Acts as a receptor for Hepatitis A virus. Functionally, (Microbial infection) Acts as a receptor for Ebolavirus and Marburg virus by binding exposed phosphatidyl-serine at the surface of virion membrane. Serves as a dual receptor for Ebolavirus by also interacting with envelope glycoprotein GP. Its function is as follows. (Microbial infection) Acts as a receptor for Dengue virus by binding exposed phosphatidyl-serine at the surface of virion membrane. TIM1 and Dengue virus are co-internalized during virus entry. In terms of biological role, (Microbial infection) Acts as a receptor for Zika virus by binding to envelope protein E. (Microbial infection) Plays a positive role in Chikungunya virus cell entry. In Homo sapiens (Human), this protein is Hepatitis A virus cellular receptor 1 (HAVCR1).